We begin with the raw amino-acid sequence, 440 residues long: NADH-quinone oxidoreductase subunit D 1 (440 aa).

Belongs to the complex I 49 kDa subunit family. As to quaternary structure, NDH-1 is composed of 14 different subunits. Subunits NuoB, C, D, E, F, and G constitute the peripheral sector of the complex.

It is found in the cell inner membrane. It catalyses the reaction a quinone + NADH + 5 H(+)(in) = a quinol + NAD(+) + 4 H(+)(out). Its function is as follows. NDH-1 shuttles electrons from NADH, via FMN and iron-sulfur (Fe-S) centers, to quinones in the respiratory chain. The immediate electron acceptor for the enzyme in this species is believed to be a menaquinone. Couples the redox reaction to proton translocation (for every two electrons transferred, four hydrogen ions are translocated across the cytoplasmic membrane), and thus conserves the redox energy in a proton gradient. This is NADH-quinone oxidoreductase subunit D 1 from Chloroherpeton thalassium (strain ATCC 35110 / GB-78).